The primary structure comprises 126 residues: Fluoride-specific ion channel FluC 2 (126 aa).

4 helical membrane passes run 5–25, 44–64, 68–88, and 99–119; these read TALT…GSVL, GTLT…GLAL, AALL…TWML, and MVSA…AALL. Na(+) is bound by residues Gly78 and Thr81.

This sequence belongs to the fluoride channel Fluc/FEX (TC 1.A.43) family.

It localises to the cell membrane. It catalyses the reaction fluoride(in) = fluoride(out). Na(+) is not transported, but it plays an essential structural role and its presence is essential for fluoride channel function. Functionally, fluoride-specific ion channel. Important for reducing fluoride concentration in the cell, thus reducing its toxicity. This Mycobacterium bovis (strain ATCC BAA-935 / AF2122/97) protein is Fluoride-specific ion channel FluC 2.